We begin with the raw amino-acid sequence, 191 residues long: MGGSGSRLSKELLAEYQDLTFLTKQEILLAHRRFCELLPQEQRSVESSLRAQVPFEQILSLPELKANPFKERICRVFSTSPAKDSLSFEDFLDLLSVFSDTATPDIKSHYAFRIFDFDDDGTLNREDLSRLVNCLTGEGEDTRLSASEMKQLIDNILEESDIDRDGTINLSEFQHVISRSPDFASSFKIVL.

Gly-2 is lipidated: N-myristoyl glycine. EF-hand domains lie at 103 to 138 (TPDI…LTGE) and 148 to 183 (EMKQ…SPDF). Ca(2+) is bound by residues Asp-116, Asp-118, Asp-120, Thr-122, Asp-127, Asp-161, Asp-163, Asp-165, Thr-167, and Glu-172. Asp-118 is subject to Phosphoserine.

As to quaternary structure, monomer. Interacts with MYO1C. Interacts (via C-terminal region) with PPP3R1 and CACNA1C; the interactions increase upon cardiomyocytes hypertrophy. Interacts with the heterodimeric integrin alpha-IIb/beta3 (ITGA2B-ITGB3). Interacts with ITGA2B (via cytoplasmic domain); the interaction is direct and calcium-dependent. Interacts with the protein kinases PLK2/SNK and PRKDC (via the region immediately upstream of the kinase domain). Interacts with PLK3; the interaction inhibits PLK3 kinase activity. Interacts with PSEN2. Interacts (via C-terminus) with F8. Interacts with NBR1 (via C-terminus). Interacts with FEZ1 (via C-terminus). Interacts with UBR5 (via C-terminus); the interaction is sensitive to DNA damage, and may target CIB1 for ubiquitin-mediated degradation. Interacts with IFI6; the interaction is direct. Interacts with BCL2. Interacts with ITPR3; the interaction occurs in a calcium-dependent manner. Interacts with PTK2/FAK1. Interacts with MAP3K5; the interaction inhibits MAP3K5 activation by phosphorylation, and its subsequent interaction with TRAF2. Isoform 2 interacts with PRKD2 (via N-terminal AP-rich region), PTK2/FAK1 and PAK1. Interacts with TAS1R2 (via C-terminus); the interaction is independent of the myristoylation state of CIB1. Interacts (via C-terminal region) with STMN2 (via the N-terminal region); the interaction is direct, occurs in a calcium-dependent manner and attenuates the STMN2-induced neurite outgrowth inhibition. Interacts with SPHK1, the interaction occurs in a calcium-dependent manner. Interacts with ITGA2B (via C-terminal cytoplasmic tail); the interaction occurs upon platelet aggregation and is stabilized/increased in a calcium and magnesium-dependent manner. Interacts with PAK1 (via N-terminal region); the interaction is direct and occurs in a calcium-dependent manner. Interacts with RAC3 (via C-terminal region); the interaction induces their association with the cytoskeleton upon alpha-IIb/beta3 integrin-mediated adhesion. Interacts with ITGA5 and ITGAV. Interacts and forms a complex with TMC6 and TMC8; the interaction stabilizes each component of the complex. (Microbial infection) Interacts with human papillomavirus 4/HPV4 protein E8, human papillomavirus 5/HPV5 protein E1, and human papillomavirus 16/HPV16 proteins E2 and E5. Post-translationally, phosphorylation of isoform 2 at Ser-118 by PRKD2 increases its ability to stimulate tumor angiogenesis. As to expression, ubiquitously expressed. Expressed in the epidermis, hair follicles and keratinocytes. Detected in platelets and in cell lines of megakaryocytic and erythrocytic lineages. Both isoform 1 and isoform 2 are detected in various cancer cell lines, with isoform 2 being the predominant form (at protein level).

The protein localises to the membrane. The protein resides in the cell membrane. It localises to the sarcolemma. It is found in the apical cell membrane. Its subcellular location is the cell projection. The protein localises to the ruffle membrane. The protein resides in the filopodium tip. It localises to the growth cone. It is found in the lamellipodium. Its subcellular location is the cytoplasm. The protein localises to the cytoskeleton. The protein resides in the microtubule organizing center. It localises to the centrosome. It is found in the perinuclear region. Its subcellular location is the nucleus. The protein localises to the neuron projection. The protein resides in the perikaryon. It localises to the golgi apparatus. It is found in the trans-Golgi network. Its function is as follows. Calcium-binding protein that plays a role in the regulation of numerous cellular processes, such as cell differentiation, cell division, cell proliferation, cell migration, thrombosis, angiogenesis, cardiac hypertrophy and apoptosis. Involved in bone marrow megakaryocyte differentiation by negatively regulating thrombopoietin-mediated signaling pathway. Participates in the endomitotic cell cycle of megakaryocyte, a form of mitosis in which both karyokinesis and cytokinesis are interrupted. Plays a role in integrin signaling by negatively regulating alpha-IIb/beta3 activation in thrombin-stimulated megakaryocytes preventing platelet aggregation. Up-regulates PTK2/FAK1 activity, and is also needed for the recruitment of PTK2/FAK1 to focal adhesions; it thus appears to play an important role in focal adhesion formation. Positively regulates cell migration on fibronectin in a CDC42-dependent manner, the effect being negatively regulated by PAK1. Functions as a negative regulator of stress activated MAP kinase (MAPK) signaling pathways. Down-regulates inositol 1,4,5-trisphosphate receptor-dependent calcium signaling. Involved in sphingosine kinase SPHK1 translocation to the plasma membrane in a N-myristoylation-dependent manner preventing TNF-alpha-induced apoptosis. Regulates serine/threonine-protein kinase PLK3 activity for proper completion of cell division progression. Plays a role in microtubule (MT) dynamics during neuronal development; disrupts the MT depolymerization activity of STMN2 attenuating NGF-induced neurite outgrowth and the MT reorganization at the edge of lamellipodia. Promotes cardiomyocyte hypertrophy via activation of the calcineurin/NFAT signaling pathway. Stimulates calcineurin PPP3R1 activity by mediating its anchoring to the sarcolemma. In ischemia-induced (pathological or adaptive) angiogenesis, stimulates endothelial cell proliferation, migration and microvessel formation by activating the PAK1 and ERK1/ERK2 signaling pathway. Also promotes cancer cell survival and proliferation. May regulate cell cycle and differentiation of spermatogenic germ cells, and/or differentiation of supporting Sertoli cells. Forms a complex with TMC6/EVER1 and TMC8/EVER2 in lymphocytes and keratynocytes where CIB1 stabilizes TMC6 and TMC8 levels and reciprocally. Functionally, acts as a restriction factor that promotes keratinocyte-intrinsic immunity to human beta-papillomaviruses (HPVs). In terms of biological role, plays a regulatory role in angiogenesis and tumor growth by mediating PKD/PRKD2-induced vascular endothelial growth factor A (VEGFA) secretion. The polypeptide is Calcium and integrin-binding protein 1 (CIB1) (Homo sapiens (Human)).